Here is a 396-residue protein sequence, read N- to C-terminus: S-adenosylmethionine synthase (396 aa).

Residue H16 participates in ATP binding. D18 lines the Mg(2+) pocket. E44 is a binding site for K(+). Positions 57 and 100 each coordinate L-methionine. Positions 100-110 (QSPDIAQGVDD) are flexible loop. ATP-binding positions include 174 to 176 (DAK), 241 to 242 (RF), D250, 256 to 257 (RK), A273, and K277. An L-methionine-binding site is contributed by D250. K281 is an L-methionine binding site.

This sequence belongs to the AdoMet synthase family. In terms of assembly, homotetramer; dimer of dimers. Mg(2+) serves as cofactor. K(+) is required as a cofactor.

The protein localises to the cytoplasm. It catalyses the reaction L-methionine + ATP + H2O = S-adenosyl-L-methionine + phosphate + diphosphate. It participates in amino-acid biosynthesis; S-adenosyl-L-methionine biosynthesis; S-adenosyl-L-methionine from L-methionine: step 1/1. Catalyzes the formation of S-adenosylmethionine (AdoMet) from methionine and ATP. The overall synthetic reaction is composed of two sequential steps, AdoMet formation and the subsequent tripolyphosphate hydrolysis which occurs prior to release of AdoMet from the enzyme. In Pediococcus pentosaceus (strain ATCC 25745 / CCUG 21536 / LMG 10740 / 183-1w), this protein is S-adenosylmethionine synthase.